A 509-amino-acid polypeptide reads, in one-letter code: Maturase K (509 aa).

This sequence belongs to the intron maturase 2 family. MatK subfamily.

Its subcellular location is the plastid. It localises to the chloroplast. Functionally, usually encoded in the trnK tRNA gene intron. Probably assists in splicing its own and other chloroplast group II introns. This Sequoia sempervirens (California redwood) protein is Maturase K.